A 302-amino-acid chain; its full sequence is Glycine--tRNA ligase alpha subunit (302 aa).

Belongs to the class-II aminoacyl-tRNA synthetase family. As to quaternary structure, tetramer of two alpha and two beta subunits.

The protein resides in the cytoplasm. The catalysed reaction is tRNA(Gly) + glycine + ATP = glycyl-tRNA(Gly) + AMP + diphosphate. The chain is Glycine--tRNA ligase alpha subunit from Baumannia cicadellinicola subsp. Homalodisca coagulata.